The following is a 216-amino-acid chain: Probable transaldolase (216 aa).

Lys83 functions as the Schiff-base intermediate with substrate in the catalytic mechanism.

This sequence belongs to the transaldolase family. Type 3B subfamily.

The protein resides in the cytoplasm. The enzyme catalyses D-sedoheptulose 7-phosphate + D-glyceraldehyde 3-phosphate = D-erythrose 4-phosphate + beta-D-fructose 6-phosphate. Its pathway is carbohydrate degradation; pentose phosphate pathway; D-glyceraldehyde 3-phosphate and beta-D-fructose 6-phosphate from D-ribose 5-phosphate and D-xylulose 5-phosphate (non-oxidative stage): step 2/3. In terms of biological role, transaldolase is important for the balance of metabolites in the pentose-phosphate pathway. The protein is Probable transaldolase of Desulforamulus reducens (strain ATCC BAA-1160 / DSM 100696 / MI-1) (Desulfotomaculum reducens).